A 95-amino-acid chain; its full sequence is Secretoglobin family 2A member 1 (95 aa).

The signal sequence occupies residues 1–18; sequence MKLVFLFLLVTIPICCYA. Residues N35 and N72 are each glycosylated (N-linked (GlcNAc...) asparagine).

It belongs to the secretoglobin family. Lipophilin subfamily. Prostatein is composed of three different peptides called C1, C2 and C3. These form covalent C1:C3 (F) and C2:C3 (S) heterodimers whose non-covalent association forms tetrameric (C1:C3/C3:C2) prostatein molecules. Expressed at very low level in ventral prostate.

The protein resides in the secreted. Its function is as follows. Part of prostatein which is the major secretory glycoprotein of ventral prostate gland. Steroid-binding protein; can bind non-polar steroids, cholesterol and a group of small proline-rich peptides. The protein is Secretoglobin family 2A member 1 of Rattus norvegicus (Rat).